A 594-amino-acid chain; its full sequence is Glutamate decarboxylase 1 (594 aa).

Residues 1 to 13 (MASSTPSSSATSS) show a composition bias toward low complexity. Residues 1–23 (MASSTPSSSATSSNAGADPNTTN) form a disordered region. Position 78 is a phosphoserine (S78). Position 190-192 (190-192 (QLS)) interacts with 4-aminobutanoate. An N6-(pyridoxal phosphate)lysine modification is found at K405. Residue R567 participates in 4-aminobutanoate binding.

Belongs to the group II decarboxylase family. Homodimer. Pyridoxal 5'-phosphate serves as cofactor.

It catalyses the reaction L-glutamate + H(+) = 4-aminobutanoate + CO2. Its function is as follows. Catalyzes the synthesis of the inhibitory neurotransmitter gamma-aminobutyric acid (GABA) with pyridoxal 5'-phosphate as cofactor. In Felis catus (Cat), this protein is Glutamate decarboxylase 1 (GAD1).